The primary structure comprises 254 residues: PF03932 family protein CutC (254 aa).

The protein belongs to the CutC family.

The protein localises to the cytoplasm. In Yersinia pestis bv. Antiqua (strain Antiqua), this protein is PF03932 family protein CutC.